We begin with the raw amino-acid sequence, 352 residues long: Ion-translocating oxidoreductase complex subunit D (352 aa).

The next 4 helical transmembrane spans lie at 20–40, 42–62, 89–109, and 123–143; these read IMLL…WFFG, GTLV…ALVL, IPPL…VIIA, and PAMI…TSWL. Residue Thr187 is modified to FMN phosphoryl threonine. The next 5 membrane-spanning stretches (helical) occupy residues 214–234, 242–262, 267–287, 301–321, and 322–342; these read ILAG…GVWL, WHIP…GWLF, LAAP…FFIL, LIFG…GGYP, and DGVA…DYYT.

Belongs to the NqrB/RnfD family. As to quaternary structure, the complex is composed of six subunits: RsxA, RsxB, RsxC, RsxD, RsxE and RsxG. Requires FMN as cofactor.

Its subcellular location is the cell inner membrane. Functionally, part of a membrane-bound complex that couples electron transfer with translocation of ions across the membrane. Required to maintain the reduced state of SoxR. This chain is Ion-translocating oxidoreductase complex subunit D, found in Escherichia coli O127:H6 (strain E2348/69 / EPEC).